Here is a 402-residue protein sequence, read N- to C-terminus: Succinyl-diaminopimelate desuccinylase (402 aa).

A Zn(2+)-binding site is contributed by histidine 88. The active site involves aspartate 90. Aspartate 121 provides a ligand contact to Zn(2+). Glutamate 155 serves as the catalytic Proton acceptor. 3 residues coordinate Zn(2+): glutamate 156, glutamate 184, and histidine 374.

The protein belongs to the peptidase M20A family. DapE subfamily. Homodimer. Requires Zn(2+) as cofactor. The cofactor is Co(2+).

The enzyme catalyses N-succinyl-(2S,6S)-2,6-diaminopimelate + H2O = (2S,6S)-2,6-diaminopimelate + succinate. The protein operates within amino-acid biosynthesis; L-lysine biosynthesis via DAP pathway; LL-2,6-diaminopimelate from (S)-tetrahydrodipicolinate (succinylase route): step 3/3. Catalyzes the hydrolysis of N-succinyl-L,L-diaminopimelic acid (SDAP), forming succinate and LL-2,6-diaminopimelate (DAP), an intermediate involved in the bacterial biosynthesis of lysine and meso-diaminopimelic acid, an essential component of bacterial cell walls. This is Succinyl-diaminopimelate desuccinylase from Psychrobacter sp. (strain PRwf-1).